The chain runs to 274 residues: Thiamine kinase (274 aa).

The protein belongs to the thiamine kinase family.

The catalysed reaction is thiamine + ATP = thiamine phosphate + ADP + H(+). It functions in the pathway cofactor biosynthesis; thiamine diphosphate biosynthesis; thiamine phosphate from thiamine: step 1/1. In terms of biological role, catalyzes the ATP-dependent phosphorylation of thiamine to thiamine phosphate. Is involved in thiamine salvage. This is Thiamine kinase from Escherichia coli O157:H7.